A 1323-amino-acid chain; its full sequence is ABC transporter C family member 12 (1323 aa).

The ABC transmembrane type-1 1 domain maps to 110–396 (HCISLFFYSI…LPILIALGIQ (287 aa)). 6 helical membrane passes run 111-131 (CISLFFYSIYVGSQFVGPEIL), 152-172 (MGYYYALIMFGTAMIGSFCNY), 227-247 (VFGILNNGLFALPQIIICLAL), 252-272 (IGWPTFVGLGLMLAAIPFNGL), 338-358 (ILIAMIGAIPTAASILVFSTY), and 375-395 (SYLNLLKIPLGFLPILIALGI). In terms of domain architecture, ABC transporter 1 spans 428–652 (VYMKNSTTTW…KLEFASLLQE (225 aa)). 464–471 (GSVGSGKS) contributes to the ATP binding site. Residues 657–695 (ENTKGDDSDDDDDKKDDDKKEEKVEKPKQSDKDGTLISE) are disordered. The segment covering 672–690 (DDDKKEEKVEKPKQSDKDG) has biased composition (basic and acidic residues). A run of 5 helical transmembrane segments spans residues 712-732 (VTAGGGLLFLFAMILFLLETG), 772-792 (IYIGVGMASIIVTVVRTFSFF), 840-860 (LIATSIAQFFTLMLSVLATLI), 862-882 (ISIIVPWLLIPLAPICILFFI), and 952-972 (WLGLRLDFLGNLIVFFSCIFI). Residues 720–1010 (FLFAMILFLL…GVLQAADTET (291 aa)) form the ABC transmembrane type-1 2 domain. An ABC transporter 2 domain is found at 1047 to 1281 (IKFDNLVMRY…QNGLLTWLVN (235 aa)). Residue 1081-1088 (GRTGAGKS) coordinates ATP.

It belongs to the ABC transporter superfamily. ABCC family. Conjugate transporter (TC 3.A.1.208) subfamily.

Its subcellular location is the membrane. The chain is ABC transporter C family member 12 (abcC12) from Dictyostelium discoideum (Social amoeba).